The chain runs to 122 residues: Large ribosomal subunit protein uL14c (122 aa).

It belongs to the universal ribosomal protein uL14 family. In terms of assembly, part of the 50S ribosomal subunit.

It localises to the plastid. It is found in the chloroplast. Functionally, binds to 23S rRNA. The sequence is that of Large ribosomal subunit protein uL14c from Morus indica (Mulberry).